The following is a 431-amino-acid chain: Gamma-glutamyl phosphate reductase (431 aa).

The protein belongs to the gamma-glutamyl phosphate reductase family.

The protein resides in the cytoplasm. It carries out the reaction L-glutamate 5-semialdehyde + phosphate + NADP(+) = L-glutamyl 5-phosphate + NADPH + H(+). The protein operates within amino-acid biosynthesis; L-proline biosynthesis; L-glutamate 5-semialdehyde from L-glutamate: step 2/2. In terms of biological role, catalyzes the NADPH-dependent reduction of L-glutamate 5-phosphate into L-glutamate 5-semialdehyde and phosphate. The product spontaneously undergoes cyclization to form 1-pyrroline-5-carboxylate. The chain is Gamma-glutamyl phosphate reductase from Bifidobacterium longum subsp. infantis (strain ATCC 15697 / DSM 20088 / JCM 1222 / NCTC 11817 / S12).